A 154-amino-acid polypeptide reads, in one-letter code: Superoxide dismutase [Cu-Zn] (154 aa).

Cu cation contacts are provided by histidine 47, histidine 49, and histidine 64. Cysteines 58 and 147 form a disulfide. Zn(2+) is bound by residues histidine 64, histidine 72, histidine 81, and aspartate 84. Residue histidine 121 participates in Cu cation binding. Position 144 (arginine 144) interacts with substrate.

This sequence belongs to the Cu-Zn superoxide dismutase family. Homodimer. Cu cation is required as a cofactor. It depends on Zn(2+) as a cofactor.

Its subcellular location is the cytoplasm. It catalyses the reaction 2 superoxide + 2 H(+) = H2O2 + O2. In terms of biological role, destroys radicals which are normally produced within the cells and which are toxic to biological systems. This is Superoxide dismutase [Cu-Zn] (sod1) from Schizosaccharomyces pombe (strain 972 / ATCC 24843) (Fission yeast).